Consider the following 418-residue polypeptide: Cobalt-zinc-cadmium resistance protein CzcC (418 aa).

The signal sequence occupies residues 1–22; that stretch reads MRRLFLPLGLAVAFLSPNFAVA.

Belongs to the outer membrane factor (OMF) (TC 1.B.17) family.

The protein resides in the cell outer membrane. Functionally, czcC protein appears to modify the specificity of the system, perhaps by acting on the CzcB protein. When the CzcC protein is added to CzcA and CzcB, the efflux system gains specificity for cadmium and cobalt. The polypeptide is Cobalt-zinc-cadmium resistance protein CzcC (czcC) (Cupriavidus metallidurans (strain ATCC 43123 / DSM 2839 / NBRC 102507 / CH34) (Ralstonia metallidurans)).